The following is a 955-amino-acid chain: Glycine dehydrogenase (decarboxylating) (955 aa).

Lys-705 carries the N6-(pyridoxal phosphate)lysine modification.

This sequence belongs to the GcvP family. The glycine cleavage system is composed of four proteins: P, T, L and H. Pyridoxal 5'-phosphate serves as cofactor.

It catalyses the reaction N(6)-[(R)-lipoyl]-L-lysyl-[glycine-cleavage complex H protein] + glycine + H(+) = N(6)-[(R)-S(8)-aminomethyldihydrolipoyl]-L-lysyl-[glycine-cleavage complex H protein] + CO2. Functionally, the glycine cleavage system catalyzes the degradation of glycine. The P protein binds the alpha-amino group of glycine through its pyridoxal phosphate cofactor; CO(2) is released and the remaining methylamine moiety is then transferred to the lipoamide cofactor of the H protein. This chain is Glycine dehydrogenase (decarboxylating), found in Aliivibrio fischeri (strain MJ11) (Vibrio fischeri).